Consider the following 265-residue polypeptide: MELASAHLHKGQVPWVGLLLTASLLTYWSPATTAQVTVEAVPPNVTADNNVLLLVHNLPQTLRVFYWYKGNSGAGHNEIGRFVTSINRSKMGLAHSGRETIYSNGSLFFQSVTKNDEGVYTLYMLDQNFEITPISVRFHVHPSLLPSLSPPTTGQVTVEAVPPNVAEGENVLLLVHNLPRTLRAIYWYRGTTAGERNEIARFITASNKIILGPAHSDREIIYNNGSLFFQGVTKNDEGAYALDMLFQNFDHTLMPVQFNVHAKKQ.

An N-terminal signal peptide occupies residues 1-33 (MELASAHLHKGQVPWVGLLLTASLLTYWSPATT). 2 Ig-like V-type domains span residues 35–142 (QVTV…HVHP) and 155–262 (QVTV…NVHA). N-linked (GlcNAc...) asparagine glycans are attached at residues Asn-44, Asn-87, and Asn-224.

It belongs to the immunoglobulin superfamily. CEA family. As to expression, abundant in seminal vesicle and traces in epididymis and prostate (at protein level). Highly expressed in seminal vesicle, minor in colon and placenta and, to a lesser extent, in small intestine, caecum, stomach, salivary gland and bone marrow.

The protein localises to the secreted. It localises to the extracellular space. In terms of biological role, may interact with other CEACAM proteins on the sperm surface. This is Cell adhesion molecule CEACAM10 from Mus musculus (Mouse).